The primary structure comprises 113 residues: Large ribosomal subunit protein bL19 (113 aa).

The protein belongs to the bacterial ribosomal protein bL19 family.

This protein is located at the 30S-50S ribosomal subunit interface and may play a role in the structure and function of the aminoacyl-tRNA binding site. This chain is Large ribosomal subunit protein bL19, found in Carboxydothermus hydrogenoformans (strain ATCC BAA-161 / DSM 6008 / Z-2901).